The sequence spans 119 residues: Ribosome-binding factor A (119 aa).

This sequence belongs to the RbfA family. Monomer. Binds 30S ribosomal subunits, but not 50S ribosomal subunits or 70S ribosomes.

It is found in the cytoplasm. One of several proteins that assist in the late maturation steps of the functional core of the 30S ribosomal subunit. Associates with free 30S ribosomal subunits (but not with 30S subunits that are part of 70S ribosomes or polysomes). Required for efficient processing of 16S rRNA. May interact with the 5'-terminal helix region of 16S rRNA. This is Ribosome-binding factor A from Pelodictyon phaeoclathratiforme (strain DSM 5477 / BU-1).